The sequence spans 143 residues: Transthyretin-like protein 33 (143 aa).

A signal peptide spans Met1 to Ala20.

It belongs to the nematode transthyretin-like family. As to expression, expressed in head cells next to and anterior of the first pharyngeal bulb, the pharynx, and the hypodermis.

It is found in the secreted. Functionally, protects dopaminergic neurons from degeneration caused by oxidative stress. This chain is Transthyretin-like protein 33, found in Caenorhabditis elegans.